A 243-amino-acid chain; its full sequence is Ubiquinone/menaquinone biosynthesis C-methyltransferase UbiE (243 aa).

Residues Thr-69, Asp-90, and 116-117 (DA) contribute to the S-adenosyl-L-methionine site.

It belongs to the class I-like SAM-binding methyltransferase superfamily. MenG/UbiE family.

The catalysed reaction is a 2-demethylmenaquinol + S-adenosyl-L-methionine = a menaquinol + S-adenosyl-L-homocysteine + H(+). It catalyses the reaction a 2-methoxy-6-(all-trans-polyprenyl)benzene-1,4-diol + S-adenosyl-L-methionine = a 5-methoxy-2-methyl-3-(all-trans-polyprenyl)benzene-1,4-diol + S-adenosyl-L-homocysteine + H(+). Its pathway is quinol/quinone metabolism; menaquinone biosynthesis; menaquinol from 1,4-dihydroxy-2-naphthoate: step 2/2. It functions in the pathway cofactor biosynthesis; ubiquinone biosynthesis. In terms of biological role, methyltransferase required for the conversion of demethylmenaquinol (DMKH2) to menaquinol (MKH2) and the conversion of 2-polyprenyl-6-methoxy-1,4-benzoquinol (DDMQH2) to 2-polyprenyl-3-methyl-6-methoxy-1,4-benzoquinol (DMQH2). The chain is Ubiquinone/menaquinone biosynthesis C-methyltransferase UbiE from Burkholderia cenocepacia (strain ATCC BAA-245 / DSM 16553 / LMG 16656 / NCTC 13227 / J2315 / CF5610) (Burkholderia cepacia (strain J2315)).